Reading from the N-terminus, the 329-residue chain is Lipoyl synthase (329 aa).

[4Fe-4S] cluster contacts are provided by cysteine 55, cysteine 60, cysteine 66, cysteine 81, cysteine 85, cysteine 88, and serine 292. In terms of domain architecture, Radical SAM core spans 67 to 281; that stretch reads WEDREATFLI…RDEAEAIGFL (215 aa).

It belongs to the radical SAM superfamily. Lipoyl synthase family. [4Fe-4S] cluster serves as cofactor.

It is found in the cytoplasm. It catalyses the reaction [[Fe-S] cluster scaffold protein carrying a second [4Fe-4S](2+) cluster] + N(6)-octanoyl-L-lysyl-[protein] + 2 oxidized [2Fe-2S]-[ferredoxin] + 2 S-adenosyl-L-methionine + 4 H(+) = [[Fe-S] cluster scaffold protein] + N(6)-[(R)-dihydrolipoyl]-L-lysyl-[protein] + 4 Fe(3+) + 2 hydrogen sulfide + 2 5'-deoxyadenosine + 2 L-methionine + 2 reduced [2Fe-2S]-[ferredoxin]. The protein operates within protein modification; protein lipoylation via endogenous pathway; protein N(6)-(lipoyl)lysine from octanoyl-[acyl-carrier-protein]: step 2/2. Catalyzes the radical-mediated insertion of two sulfur atoms into the C-6 and C-8 positions of the octanoyl moiety bound to the lipoyl domains of lipoate-dependent enzymes, thereby converting the octanoylated domains into lipoylated derivatives. The sequence is that of Lipoyl synthase from Leifsonia xyli subsp. xyli (strain CTCB07).